A 155-amino-acid chain; its full sequence is Ribosomal RNA large subunit methyltransferase H (155 aa).

S-adenosyl-L-methionine contacts are provided by residues Leu72, Gly103, and 122 to 127 (LSALTL).

The protein belongs to the RNA methyltransferase RlmH family. In terms of assembly, homodimer.

It localises to the cytoplasm. It catalyses the reaction pseudouridine(1915) in 23S rRNA + S-adenosyl-L-methionine = N(3)-methylpseudouridine(1915) in 23S rRNA + S-adenosyl-L-homocysteine + H(+). Specifically methylates the pseudouridine at position 1915 (m3Psi1915) in 23S rRNA. This chain is Ribosomal RNA large subunit methyltransferase H, found in Escherichia fergusonii (strain ATCC 35469 / DSM 13698 / CCUG 18766 / IAM 14443 / JCM 21226 / LMG 7866 / NBRC 102419 / NCTC 12128 / CDC 0568-73).